The primary structure comprises 1408 residues: DNA-directed RNA polymerase subunit beta' (1408 aa).

Residues Cys-70, Cys-72, Cys-85, and Cys-88 each coordinate Zn(2+). Mg(2+) is bound by residues Asp-460, Asp-462, and Asp-464. Residues Cys-814, Cys-888, Cys-895, and Cys-898 each coordinate Zn(2+).

Belongs to the RNA polymerase beta' chain family. The RNAP catalytic core consists of 2 alpha, 1 beta, 1 beta' and 1 omega subunit. When a sigma factor is associated with the core the holoenzyme is formed, which can initiate transcription. The cofactor is Mg(2+). It depends on Zn(2+) as a cofactor.

The enzyme catalyses RNA(n) + a ribonucleoside 5'-triphosphate = RNA(n+1) + diphosphate. Its function is as follows. DNA-dependent RNA polymerase catalyzes the transcription of DNA into RNA using the four ribonucleoside triphosphates as substrates. This is DNA-directed RNA polymerase subunit beta' from Shewanella frigidimarina (strain NCIMB 400).